Reading from the N-terminus, the 180-residue chain is Nucleoside-triphosphatase THEP1 (180 aa).

ATP contacts are provided by residues 9 to 16 and 99 to 106; these read GRPGIGKT and VVIVDEVG.

This sequence belongs to the THEP1 NTPase family.

It catalyses the reaction a ribonucleoside 5'-triphosphate + H2O = a ribonucleoside 5'-diphosphate + phosphate + H(+). Its function is as follows. Has nucleotide phosphatase activity towards ATP, GTP, CTP, TTP and UTP. May hydrolyze nucleoside diphosphates with lower efficiency. In Methanopyrus kandleri (strain AV19 / DSM 6324 / JCM 9639 / NBRC 100938), this protein is Nucleoside-triphosphatase THEP1.